The following is a 189-amino-acid chain: Elongation factor P (189 aa).

Lysine 34 is modified (N6-(3,6-diaminohexanoyl)-5-hydroxylysine).

This sequence belongs to the elongation factor P family. Post-translationally, may be beta-lysylated on the epsilon-amino group of Lys-34 by the combined action of EpmA and EpmB, and then hydroxylated on the C5 position of the same residue by EpmC (if this protein is present). Lysylation is critical for the stimulatory effect of EF-P on peptide-bond formation. The lysylation moiety may extend toward the peptidyltransferase center and stabilize the terminal 3-CCA end of the tRNA. Hydroxylation of the C5 position on Lys-34 may allow additional potential stabilizing hydrogen-bond interactions with the P-tRNA.

It is found in the cytoplasm. Its pathway is protein biosynthesis; polypeptide chain elongation. Its function is as follows. Involved in peptide bond synthesis. Alleviates ribosome stalling that occurs when 3 or more consecutive Pro residues or the sequence PPG is present in a protein, possibly by augmenting the peptidyl transferase activity of the ribosome. Modification of Lys-34 is required for alleviation. The sequence is that of Elongation factor P from Halorhodospira halophila (strain DSM 244 / SL1) (Ectothiorhodospira halophila (strain DSM 244 / SL1)).